The following is a 22-amino-acid chain: AVSCFKACMKKRGIPFVCSVDC.

Contains 2 disulfide bonds. In terms of tissue distribution, expressed by the venom gland.

The protein localises to the secreted. In terms of biological role, not lethal to mice by intraperitoneal or intracerebroventricular injections in doses up to 100 micrograms. This Heterometrus spinifer (Asia giant forest scorpion) protein is 2.39 kDa venom peptide.